We begin with the raw amino-acid sequence, 160 residues long: Large ribosomal subunit protein eL21 (160 aa).

Composition is skewed to basic and acidic residues over residues 112–123 and 136–145; these read NDQKKKEAKEKG and REAHFVRTNG. Positions 112–145 are disordered; it reads NDQKKKEAKEKGTWVQLKRQPAPPREAHFVRTNG.

It belongs to the eukaryotic ribosomal protein eL21 family. As to quaternary structure, component of the large ribosomal subunit.

The protein resides in the cytoplasm. Its subcellular location is the cytosol. It localises to the endoplasmic reticulum. Functionally, component of the large ribosomal subunit. The ribosome is a large ribonucleoprotein complex responsible for the synthesis of proteins in the cell. The protein is Large ribosomal subunit protein eL21 (RPL21) of Capra hircus (Goat).